Reading from the N-terminus, the 415-residue chain is Gamma-glutamyl phosphate reductase (415 aa).

The protein belongs to the gamma-glutamyl phosphate reductase family.

The protein resides in the cytoplasm. It carries out the reaction L-glutamate 5-semialdehyde + phosphate + NADP(+) = L-glutamyl 5-phosphate + NADPH + H(+). The protein operates within amino-acid biosynthesis; L-proline biosynthesis; L-glutamate 5-semialdehyde from L-glutamate: step 2/2. Its function is as follows. Catalyzes the NADPH-dependent reduction of L-glutamate 5-phosphate into L-glutamate 5-semialdehyde and phosphate. The product spontaneously undergoes cyclization to form 1-pyrroline-5-carboxylate. The protein is Gamma-glutamyl phosphate reductase of Lachnospira eligens (strain ATCC 27750 / DSM 3376 / VPI C15-48 / C15-B4) (Eubacterium eligens).